A 439-amino-acid polypeptide reads, in one-letter code: O-methyltransferase aurJ (439 aa).

Position 283 (aspartate 283) interacts with S-adenosyl-L-methionine. Histidine 338 functions as the Proton acceptor in the catalytic mechanism.

This sequence belongs to the class I-like SAM-binding methyltransferase superfamily. Cation-independent O-methyltransferase family. COMT subfamily.

The catalysed reaction is norrubrofusarin + S-adenosyl-L-methionine = rubrofusarin + S-adenosyl-L-homocysteine + H(+). It functions in the pathway pigment biosynthesis. Its function is as follows. O-methyltransferase; part of the gene cluster that mediates the biosynthesis of aurofusarin, a red mycelium pigment which is acting as a mycotoxin. The first step is performed by the polyketide synthase which condenses one acetyl-CoA and 6 malonyl-CoA units to form the first intermediate, the cyclic heptaketide and yellow pigment YWA1. The C2 hydroxyl group in the pyrone ring of YWA1 is probably formed during ring closure by an aldol-type cyclization reaction. The dehydratase aurZ then acts as the first tailoring enzyme in the aurofusarin biosynthetic pathway by converting YWA1 to nor-rubrofusarin. Nor-rubrofusarin is then methylated to rubrofusarin by the O-methyltransferase aurJ. Rubrofusarin is then transported across the plasma membrane by the rubrofusarin-specific pump aurT for further enzymatic processing by the extracellular complex composed of GIP1, aurF, aurO and aurS to yield aurofusarin. This is O-methyltransferase aurJ from Gibberella zeae (strain ATCC MYA-4620 / CBS 123657 / FGSC 9075 / NRRL 31084 / PH-1) (Wheat head blight fungus).